The sequence spans 60 residues: Large ribosomal subunit protein bL32 (60 aa).

This sequence belongs to the bacterial ribosomal protein bL32 family.

This is Large ribosomal subunit protein bL32 from Borreliella afzelii (strain PKo) (Borrelia afzelii).